Consider the following 439-residue polypeptide: Trigger factor (439 aa).

Residues 162–247 (GDTVTIDYVG…IHEVKAKQLP (86 aa)) form the PPIase FKBP-type domain.

Belongs to the FKBP-type PPIase family. Tig subfamily.

Its subcellular location is the cytoplasm. It carries out the reaction [protein]-peptidylproline (omega=180) = [protein]-peptidylproline (omega=0). Its function is as follows. Involved in protein export. Acts as a chaperone by maintaining the newly synthesized protein in an open conformation. Functions as a peptidyl-prolyl cis-trans isomerase. In Lactobacillus delbrueckii subsp. bulgaricus (strain ATCC 11842 / DSM 20081 / BCRC 10696 / JCM 1002 / NBRC 13953 / NCIMB 11778 / NCTC 12712 / WDCM 00102 / Lb 14), this protein is Trigger factor.